The following is a 331-amino-acid chain: Mycothiol acetyltransferase (331 aa).

Residue Glu-33 coordinates 1D-myo-inositol 2-(L-cysteinylamino)-2-deoxy-alpha-D-glucopyranoside. The segment covering His-59–Ala-86 has biased composition (low complexity). The interval His-59–Ala-89 is disordered. Arg-115–Ser-120 is an acetyl-CoA binding site. The N-acetyltransferase domain occupies Leu-183–Gly-331. Positions 210, 249, and 261 each coordinate 1D-myo-inositol 2-(L-cysteinylamino)-2-deoxy-alpha-D-glucopyranoside. Residue Val-265–Thr-267 coordinates acetyl-CoA. 1D-myo-inositol 2-(L-cysteinylamino)-2-deoxy-alpha-D-glucopyranoside is bound at residue Tyr-299. Asn-304–Arg-309 is an acetyl-CoA binding site.

Belongs to the acetyltransferase family. MshD subfamily. As to quaternary structure, monomer.

The catalysed reaction is 1D-myo-inositol 2-(L-cysteinylamino)-2-deoxy-alpha-D-glucopyranoside + acetyl-CoA = mycothiol + CoA + H(+). Its function is as follows. Catalyzes the transfer of acetyl from acetyl-CoA to desacetylmycothiol (Cys-GlcN-Ins) to form mycothiol. This is Mycothiol acetyltransferase from Brachybacterium faecium (strain ATCC 43885 / DSM 4810 / JCM 11609 / LMG 19847 / NBRC 14762 / NCIMB 9860 / 6-10).